Consider the following 236-residue polypeptide: Venom metalloproteinase antarease-like TfasMP_A (236 aa).

Residues 4-232 (IVVEYYIVTD…KPAASCIFEQ (229 aa)) form the Peptidase M12B domain. Histidine 161 contacts Zn(2+). Glutamate 162 is an active-site residue. Zn(2+) contacts are provided by histidine 165 and histidine 171.

The protein belongs to the venom metalloproteinase (M12B) family. It depends on Zn(2+) as a cofactor. In terms of processing, contains several disulfide bonds. Expressed by the venom gland.

The protein localises to the secreted. With respect to regulation, inhibited by EDTA. In terms of biological role, acts as a metalloprotease. Penetrates intact tissue and specifically cleaves the vesicle-associated membrane protein 2 (VAMP2) (part of the SNARE complex) involved in pancreatic secretion, thus disrupting the normal vesicular traffic. The protein is Venom metalloproteinase antarease-like TfasMP_A of Tityus fasciolatus (Central Brazilian scorpion).